The chain runs to 169 residues: HTH-type transcriptional regulator PchR (169 aa).

In terms of domain architecture, HTH marR-type spans 10 to 153 (YDIYVRLLHL…VLKFLEQLTS (144 aa)). A DNA-binding region (H-T-H motif) is located at residues 64 to 87 (NAGIARKMNLSKANVTKISTKLIK).

As to quaternary structure, homodimer.

Functionally, represses the expression of the yvmC-cypX operon, which is involved in pulcherriminic acid biosynthesis. Also negatively regulates yvmA, yvnB and its own expression. Positively regulates yisI expression. Acts by binding specifically to a 14-bp palindromic motif, the YvmB box, which is present in the promoter region of the target genes. This chain is HTH-type transcriptional regulator PchR, found in Bacillus subtilis (strain 168).